We begin with the raw amino-acid sequence, 165 residues long: Protein OPG091 (165 aa).

Belongs to the orthopoxvirus OPG091 family.

It is found in the virion. The protein localises to the host cytoplasm. In terms of biological role, contributes to vaccinia virus virulence in mice but not to replication in cell culture. The polypeptide is Protein OPG091 (OPG091) (Homo sapiens (Human)).